Reading from the N-terminus, the 260-residue chain is NH(3)-dependent NAD(+) synthetase (260 aa).

31 to 38 (GLSGGLDS) lines the ATP pocket. Asp-37 is a binding site for Mg(2+). Arg-112 lines the deamido-NAD(+) pocket. Thr-132 is a binding site for ATP. Glu-137 serves as a coordination point for Mg(2+). The ATP site is built by Lys-161 and Ser-183.

It belongs to the NAD synthetase family. Homodimer.

It catalyses the reaction deamido-NAD(+) + NH4(+) + ATP = AMP + diphosphate + NAD(+) + H(+). It participates in cofactor biosynthesis; NAD(+) biosynthesis; NAD(+) from deamido-NAD(+) (ammonia route): step 1/1. In terms of biological role, catalyzes the ATP-dependent amidation of deamido-NAD to form NAD. Uses ammonia as a nitrogen source. In Helicobacter pylori (strain J99 / ATCC 700824) (Campylobacter pylori J99), this protein is NH(3)-dependent NAD(+) synthetase.